The following is a 363-amino-acid chain: Mitogen-activated protein kinase 4 (363 aa).

One can recognise a Protein kinase domain in the interval 30–318 (YDLVKVVGFG…AKQVMEHPYF (289 aa)). Residues 36 to 44 (VGFGACGTV) and Lys-59 contribute to the ATP site. Asp-156 (proton acceptor) is an active-site residue. Residues Ser-186 and Ser-187 each carry the phosphoserine modification. Thr-190 is modified (phosphothreonine; by MKK5). The TQY motif lies at 190–192 (TQY). Tyr-192 carries the post-translational modification Phosphotyrosine; by MKK5.

The protein belongs to the protein kinase superfamily. CMGC Ser/Thr protein kinase family. MAP kinase subfamily. It depends on Mg(2+) as a cofactor. In terms of processing, dually phosphorylated on Thr-190 and Tyr-192, which activates the enzyme.

It carries out the reaction L-seryl-[protein] + ATP = O-phospho-L-seryl-[protein] + ADP + H(+). It catalyses the reaction L-threonyl-[protein] + ATP = O-phospho-L-threonyl-[protein] + ADP + H(+). Its function is as follows. Essential for the two main proliferating life stages, the promastigotes and amastigotes, of the parasite. This chain is Mitogen-activated protein kinase 4, found in Leishmania mexicana.